Consider the following 428-residue polypeptide: Protein CLP1 homolog (428 aa).

ATP contacts are provided by residues E22, K63, and 127-132 (DVGKST).

It belongs to the Clp1 family. Clp1 subfamily.

The protein resides in the nucleus. Its function is as follows. Required for endonucleolytic cleavage during polyadenylation-dependent pre-mRNA 3'-end formation. This chain is Protein CLP1 homolog, found in Nematostella vectensis (Starlet sea anemone).